A 104-amino-acid chain; its full sequence is Large ribosomal subunit protein bL21 (104 aa).

Belongs to the bacterial ribosomal protein bL21 family. In terms of assembly, part of the 50S ribosomal subunit. Contacts protein L20.

Its function is as follows. This protein binds to 23S rRNA in the presence of protein L20. This is Large ribosomal subunit protein bL21 from Gluconacetobacter diazotrophicus (strain ATCC 49037 / DSM 5601 / CCUG 37298 / CIP 103539 / LMG 7603 / PAl5).